Here is a 361-residue protein sequence, read N- to C-terminus: Histidinol-phosphate aminotransferase (361 aa).

Lys219 is modified (N6-(pyridoxal phosphate)lysine).

This sequence belongs to the class-II pyridoxal-phosphate-dependent aminotransferase family. Histidinol-phosphate aminotransferase subfamily. In terms of assembly, homodimer. The cofactor is pyridoxal 5'-phosphate.

The catalysed reaction is L-histidinol phosphate + 2-oxoglutarate = 3-(imidazol-4-yl)-2-oxopropyl phosphate + L-glutamate. It participates in amino-acid biosynthesis; L-histidine biosynthesis; L-histidine from 5-phospho-alpha-D-ribose 1-diphosphate: step 7/9. This is Histidinol-phosphate aminotransferase from Acinetobacter baumannii (strain ATCC 17978 / DSM 105126 / CIP 53.77 / LMG 1025 / NCDC KC755 / 5377).